Here is a 283-residue protein sequence, read N- to C-terminus: Undecaprenyl-diphosphatase (283 aa).

7 consecutive transmembrane segments (helical) span residues 40-60 (GAAFTAIVQIGTLAAVLIYFF), 85-105 (AKMGWMIAAGTIPIVIFGLLF), 113-133 (LRSLYWISGALIGLALLLTIA), 153-173 (IGWKDALLIGLIQSIALIPGS), 193-213 (AARFSFLLSLPSVLAAGVFQL), 227-247 (LIAIIVATIVSGIVGYASIAF), and 259-279 (VFIIYRLLLGSGILLMLATGM).

It belongs to the UppP family.

Its subcellular location is the cell inner membrane. The catalysed reaction is di-trans,octa-cis-undecaprenyl diphosphate + H2O = di-trans,octa-cis-undecaprenyl phosphate + phosphate + H(+). Catalyzes the dephosphorylation of undecaprenyl diphosphate (UPP). Confers resistance to bacitracin. In Chlorobium limicola (strain DSM 245 / NBRC 103803 / 6330), this protein is Undecaprenyl-diphosphatase.